A 45-amino-acid chain; its full sequence is Cytochrome b559 subunit beta (45 aa).

Residues 20–36 (WIAVHTLAVPTVFFLGA) form a helical membrane-spanning segment. Position 24 (H24) interacts with heme.

The protein belongs to the PsbE/PsbF family. In terms of assembly, heterodimer of an alpha subunit and a beta subunit. PSII is composed of 1 copy each of membrane proteins PsbA, PsbB, PsbC, PsbD, PsbE, PsbF, PsbH, PsbI, PsbJ, PsbK, PsbL, PsbM, PsbT, PsbX, PsbY, PsbZ, Psb30/Ycf12, peripheral proteins PsbO, CyanoQ (PsbQ), PsbU, PsbV and a large number of cofactors. It forms dimeric complexes. The cofactor is heme b.

The protein localises to the cellular thylakoid membrane. In terms of biological role, this b-type cytochrome is tightly associated with the reaction center of photosystem II (PSII). PSII is a light-driven water:plastoquinone oxidoreductase that uses light energy to abstract electrons from H(2)O, generating O(2) and a proton gradient subsequently used for ATP formation. It consists of a core antenna complex that captures photons, and an electron transfer chain that converts photonic excitation into a charge separation. The sequence is that of Cytochrome b559 subunit beta from Nostoc sp. (strain PCC 7120 / SAG 25.82 / UTEX 2576).